Consider the following 99-residue polypeptide: uncharacterized protein (99 aa).

This is an uncharacterized protein from Caenorhabditis elegans.